The chain runs to 492 residues: Protein nucleotidyltransferase YdiU (492 aa).

ATP-binding residues include G88, G90, R91, K111, D123, G124, R174, and R181. D250 acts as the Proton acceptor in catalysis. Mg(2+)-binding residues include N251 and D260. D260 contacts ATP.

Belongs to the SELO family. The cofactor is Mg(2+). It depends on Mn(2+) as a cofactor.

The catalysed reaction is L-seryl-[protein] + ATP = 3-O-(5'-adenylyl)-L-seryl-[protein] + diphosphate. It carries out the reaction L-threonyl-[protein] + ATP = 3-O-(5'-adenylyl)-L-threonyl-[protein] + diphosphate. The enzyme catalyses L-tyrosyl-[protein] + ATP = O-(5'-adenylyl)-L-tyrosyl-[protein] + diphosphate. It catalyses the reaction L-histidyl-[protein] + UTP = N(tele)-(5'-uridylyl)-L-histidyl-[protein] + diphosphate. The catalysed reaction is L-seryl-[protein] + UTP = O-(5'-uridylyl)-L-seryl-[protein] + diphosphate. It carries out the reaction L-tyrosyl-[protein] + UTP = O-(5'-uridylyl)-L-tyrosyl-[protein] + diphosphate. In terms of biological role, nucleotidyltransferase involved in the post-translational modification of proteins. It can catalyze the addition of adenosine monophosphate (AMP) or uridine monophosphate (UMP) to a protein, resulting in modifications known as AMPylation and UMPylation. The protein is Protein nucleotidyltransferase YdiU of Rhodopseudomonas palustris (strain BisB5).